A 113-amino-acid chain; its full sequence is Hydrogenase maturation factor HypA (113 aa).

Histidine 2 is a binding site for Ni(2+). The Zn(2+) site is built by cysteine 73, cysteine 76, cysteine 89, and cysteine 92.

This sequence belongs to the HypA/HybF family.

Its function is as follows. Involved in the maturation of [NiFe] hydrogenases. Required for nickel insertion into the metal center of the hydrogenase. The polypeptide is Hydrogenase maturation factor HypA (Beijerinckia indica subsp. indica (strain ATCC 9039 / DSM 1715 / NCIMB 8712)).